The primary structure comprises 440 residues: 5-methylthioadenosine/S-adenosylhomocysteine deaminase (440 aa).

Zn(2+) is bound by residues H69 and H71. Substrate is bound by residues E98 and H190. Position 217 (H217) interacts with Zn(2+). E220 and D305 together coordinate substrate. D305 lines the Zn(2+) pocket.

Belongs to the metallo-dependent hydrolases superfamily. MTA/SAH deaminase family. Zn(2+) serves as cofactor.

It catalyses the reaction S-adenosyl-L-homocysteine + H2O + H(+) = S-inosyl-L-homocysteine + NH4(+). It carries out the reaction S-methyl-5'-thioadenosine + H2O + H(+) = S-methyl-5'-thioinosine + NH4(+). Catalyzes the deamination of 5-methylthioadenosine and S-adenosyl-L-homocysteine into 5-methylthioinosine and S-inosyl-L-homocysteine, respectively. Is also able to deaminate adenosine. This is 5-methylthioadenosine/S-adenosylhomocysteine deaminase from Desulfovibrio desulfuricans (strain ATCC 27774 / DSM 6949 / MB).